The primary structure comprises 217 residues: MIRIIFLGPPGSGKGTQAHLIANKYNIPNISTGTMLRQALTRSTHKSYELHKNIMHTGDLVNDEFMVQLISTRINQNDCRNGFLLDGFPRTILQAKSMKQCKIFVNYIIEFFASDSVIIDRIAGRRIHVGSGRTYHIKFNPPRNYGLDDITGEILTTRKDDHEEAIRKRLSNYYQHTEPVLDYYREESKYKKMKYFSVDGNRDISKIYKELINIISS.

Residue 11-16 (GSGKGT) participates in ATP binding. Residues 31–61 (STGTMLRQALTRSTHKSYELHKNIMHTGDLV) are NMP. AMP-binding positions include threonine 32, arginine 37, 59-61 (DLV), 87-90 (GFPR), and glutamine 94. The tract at residues 124-161 (GRRIHVGSGRTYHIKFNPPRNYGLDDITGEILTTRKDD) is LID. Residues arginine 125 and 134 to 135 (TY) contribute to the ATP site. The AMP site is built by arginine 158 and arginine 169. Arginine 202 is a binding site for ATP.

The protein belongs to the adenylate kinase family. Monomer.

Its subcellular location is the cytoplasm. The catalysed reaction is AMP + ATP = 2 ADP. Its pathway is purine metabolism; AMP biosynthesis via salvage pathway; AMP from ADP: step 1/1. Its function is as follows. Catalyzes the reversible transfer of the terminal phosphate group between ATP and AMP. Plays an important role in cellular energy homeostasis and in adenine nucleotide metabolism. The sequence is that of Adenylate kinase from Blochmanniella pennsylvanica (strain BPEN).